The sequence spans 310 residues: UDP-N-acetylenolpyruvoylglucosamine reductase (310 aa).

In terms of domain architecture, FAD-binding PCMH-type spans 31-216 (KIGGPADYFV…LRKIEELNQA (186 aa)). R180 is a catalytic residue. S230 acts as the Proton donor in catalysis. Residue E300 is part of the active site.

The protein belongs to the MurB family. FAD serves as cofactor.

The protein resides in the cytoplasm. It catalyses the reaction UDP-N-acetyl-alpha-D-muramate + NADP(+) = UDP-N-acetyl-3-O-(1-carboxyvinyl)-alpha-D-glucosamine + NADPH + H(+). It participates in cell wall biogenesis; peptidoglycan biosynthesis. Cell wall formation. The protein is UDP-N-acetylenolpyruvoylglucosamine reductase of Lachnoclostridium phytofermentans (strain ATCC 700394 / DSM 18823 / ISDg) (Clostridium phytofermentans).